Consider the following 195-residue polypeptide: Imidazoleglycerol-phosphate dehydratase (195 aa).

This sequence belongs to the imidazoleglycerol-phosphate dehydratase family.

The protein localises to the cytoplasm. It carries out the reaction D-erythro-1-(imidazol-4-yl)glycerol 3-phosphate = 3-(imidazol-4-yl)-2-oxopropyl phosphate + H2O. It functions in the pathway amino-acid biosynthesis; L-histidine biosynthesis; L-histidine from 5-phospho-alpha-D-ribose 1-diphosphate: step 6/9. In Maridesulfovibrio salexigens (strain ATCC 14822 / DSM 2638 / NCIMB 8403 / VKM B-1763) (Desulfovibrio salexigens), this protein is Imidazoleglycerol-phosphate dehydratase.